The following is a 73-amino-acid chain: Translation initiation factor IF-1 (73 aa).

One can recognise an S1-like domain in the interval 1–73 (MAKKDGVIEL…ARGRIVYRYK (73 aa)).

Belongs to the IF-1 family. Component of the 30S ribosomal translation pre-initiation complex which assembles on the 30S ribosome in the order IF-2 and IF-3, IF-1 and N-formylmethionyl-tRNA(fMet); mRNA recruitment can occur at any time during PIC assembly.

The protein localises to the cytoplasm. Its function is as follows. One of the essential components for the initiation of protein synthesis. Stabilizes the binding of IF-2 and IF-3 on the 30S subunit to which N-formylmethionyl-tRNA(fMet) subsequently binds. Helps modulate mRNA selection, yielding the 30S pre-initiation complex (PIC). Upon addition of the 50S ribosomal subunit IF-1, IF-2 and IF-3 are released leaving the mature 70S translation initiation complex. The polypeptide is Translation initiation factor IF-1 (Tropheryma whipplei (strain TW08/27) (Whipple's bacillus)).